A 261-amino-acid polypeptide reads, in one-letter code: MIYKCPMCREFFSERADLFMHQKIHTAEKPHKCDKCDKGFFHISELHIHWRDHTGEKVYKCDDCGKDFSTTTKLNRHKKIHTVEKPYKCYECGKAFNWSSHLQIHMRVHTGEKPYVCSECGRGFSNSSNLCMHQRVHTGEKPFKCEECGKAFRHTSSLCMHQRVHTGEKLYKCYECGKAFSQSSSLCIHQRVHTGEKPYRCCGCGKAFSQSSSLCIHQRVHTGEKPFKCDECGKAFSQSTSLCIHQRVHTKERNHLKISVI.

C2H2-type zinc fingers lie at residues 3–25 (YKCP…QKIH), 31–53 (HKCD…WRDH), 59–81 (YKCD…KKIH), 87–109 (YKCY…MRVH), 115–137 (YVCS…QRVH), 143–165 (FKCE…QRVH), 171–193 (YKCY…QRVH), 199–221 (YRCC…QRVH), and 227–249 (FKCD…QRVH). A Glycyl lysine isopeptide (Lys-Gly) (interchain with G-Cter in SUMO2) cross-link involves residue lysine 257.

It belongs to the krueppel C2H2-type zinc-finger protein family.

Its subcellular location is the nucleus. Functionally, may be involved in transcriptional regulation. The polypeptide is Zinc finger protein 664 (ZNF664) (Pongo abelii (Sumatran orangutan)).